Here is a 379-residue protein sequence, read N- to C-terminus: Homoserine O-acetyltransferase (379 aa).

The AB hydrolase-1 domain maps to 54–332 (NAILVCHALS…PYQSEEIVKS (279 aa)). Catalysis depends on Ser-159, which acts as the Nucleophile. Substrate is bound at residue Arg-228. Residues Asp-318 and His-352 contribute to the active site. Residue Asp-353 participates in substrate binding.

It belongs to the AB hydrolase superfamily. MetX family. In terms of assembly, homodimer.

It is found in the cytoplasm. The catalysed reaction is L-homoserine + acetyl-CoA = O-acetyl-L-homoserine + CoA. It participates in amino-acid biosynthesis; L-methionine biosynthesis via de novo pathway; O-acetyl-L-homoserine from L-homoserine: step 1/1. Functionally, transfers an acetyl group from acetyl-CoA to L-homoserine, forming acetyl-L-homoserine. The sequence is that of Homoserine O-acetyltransferase from Leptospira meyeri.